A 223-amino-acid chain; its full sequence is Phosphoribosylformylglycinamidine synthase subunit PurQ (223 aa).

One can recognise a Glutamine amidotransferase type-1 domain in the interval 2–223; the sequence is KFAVLKFPGS…MVNSWREQNV (222 aa). The active-site Nucleophile is the Cys-85. Catalysis depends on residues His-193 and Glu-195.

In terms of assembly, part of the FGAM synthase complex composed of 1 PurL, 1 PurQ and 2 PurS subunits.

The protein localises to the cytoplasm. It carries out the reaction N(2)-formyl-N(1)-(5-phospho-beta-D-ribosyl)glycinamide + L-glutamine + ATP + H2O = 2-formamido-N(1)-(5-O-phospho-beta-D-ribosyl)acetamidine + L-glutamate + ADP + phosphate + H(+). The catalysed reaction is L-glutamine + H2O = L-glutamate + NH4(+). The protein operates within purine metabolism; IMP biosynthesis via de novo pathway; 5-amino-1-(5-phospho-D-ribosyl)imidazole from N(2)-formyl-N(1)-(5-phospho-D-ribosyl)glycinamide: step 1/2. In terms of biological role, part of the phosphoribosylformylglycinamidine synthase complex involved in the purines biosynthetic pathway. Catalyzes the ATP-dependent conversion of formylglycinamide ribonucleotide (FGAR) and glutamine to yield formylglycinamidine ribonucleotide (FGAM) and glutamate. The FGAM synthase complex is composed of three subunits. PurQ produces an ammonia molecule by converting glutamine to glutamate. PurL transfers the ammonia molecule to FGAR to form FGAM in an ATP-dependent manner. PurS interacts with PurQ and PurL and is thought to assist in the transfer of the ammonia molecule from PurQ to PurL. The protein is Phosphoribosylformylglycinamidine synthase subunit PurQ of Staphylococcus saprophyticus subsp. saprophyticus (strain ATCC 15305 / DSM 20229 / NCIMB 8711 / NCTC 7292 / S-41).